A 367-amino-acid polypeptide reads, in one-letter code: Aminomethyltransferase (367 aa).

Belongs to the GcvT family. As to quaternary structure, the glycine cleavage system is composed of four proteins: P, T, L and H.

The catalysed reaction is N(6)-[(R)-S(8)-aminomethyldihydrolipoyl]-L-lysyl-[protein] + (6S)-5,6,7,8-tetrahydrofolate = N(6)-[(R)-dihydrolipoyl]-L-lysyl-[protein] + (6R)-5,10-methylene-5,6,7,8-tetrahydrofolate + NH4(+). In terms of biological role, the glycine cleavage system catalyzes the degradation of glycine. This Mycobacterium avium (strain 104) protein is Aminomethyltransferase.